The chain runs to 397 residues: tRNA(Ile)-lysidine synthase (397 aa).

44 to 49 (SGGADS) lines the ATP pocket.

It belongs to the tRNA(Ile)-lysidine synthase family.

It is found in the cytoplasm. It carries out the reaction cytidine(34) in tRNA(Ile2) + L-lysine + ATP = lysidine(34) in tRNA(Ile2) + AMP + diphosphate + H(+). In terms of biological role, ligates lysine onto the cytidine present at position 34 of the AUA codon-specific tRNA(Ile) that contains the anticodon CAU, in an ATP-dependent manner. Cytidine is converted to lysidine, thus changing the amino acid specificity of the tRNA from methionine to isoleucine. In Rhodopirellula baltica (strain DSM 10527 / NCIMB 13988 / SH1), this protein is tRNA(Ile)-lysidine synthase.